The following is a 464-amino-acid chain: Protein FAM90A7 (464 aa).

3 disordered regions span residues M1–L42, V69–D387, and A410–P437. Basic and acidic residues-rich tracts occupy residues G74–A89 and N97–D111. Over residues L180–L197 the composition is skewed to low complexity.

The protein belongs to the FAM90 family.

In Homo sapiens (Human), this protein is Protein FAM90A7.